The sequence spans 362 residues: Adenosine deaminase (362 aa).

Zn(2+) is bound by residues histidine 41 and histidine 43. An a purine D-ribonucleoside-binding site is contributed by 43 to 45 (HLD). A gating helix loop; regulates binding affinity for substrates and thus substrate selectivity region spans residues 169–183 (IGETGISEESLRKAA). A purine D-ribonucleoside is bound at residue glycine 200. Histidine 225 lines the Zn(2+) pocket. The a purine D-ribonucleoside site is built by glutamate 228, histidine 252, and aspartate 309. Residue aspartate 309 participates in Zn(2+) binding.

Belongs to the metallo-dependent hydrolases superfamily. Adenosine and AMP deaminases family. Zn(2+) serves as cofactor.

The catalysed reaction is adenosine + H2O + H(+) = inosine + NH4(+). It functions in the pathway purine metabolism; purine nucleoside salvage. Inhibited by coformycin but not by methylthiocoformycin (MT-coformycin). Catalyzes the hydrolytic deamination of adenosine to produce inosine. Unlike other Plasmodium adenosine deaminases, does not catalyze the deamination of 5'-methylthioadenosine (MTA). Plays an essential role in the purine salvage pathway which allows the parasite to use host cell purines for the synthesis of nucleic acids. In Plasmodium gallinaceum, this protein is Adenosine deaminase.